Reading from the N-terminus, the 334-residue chain is 4-hydroxyproline 2-epimerase (334 aa).

C90 (proton acceptor) is an active-site residue. Residues 91–92 (GH), H223, and D249 contribute to the substrate site. C253 functions as the Proton donor in the catalytic mechanism. 254-255 (GT) lines the substrate pocket.

It belongs to the proline racemase family. In terms of assembly, homodimer.

The enzyme catalyses trans-4-hydroxy-L-proline = cis-4-hydroxy-D-proline. Its function is as follows. Catalyzes the epimerization of trans-4-hydroxy-L-proline (t4LHyp) to cis-4-hydroxy-D-proline (c4DHyp). Is likely involved in a degradation pathway that converts t4LHyp to alpha-ketoglutarate, which would allow P.denitrificans to grow on t4LHyp as a sole carbon source. Also seems to be involved in an alternative catabolic pathway that degrades trans-4-hydroxy-L-proline betaine (tHyp-B) to alpha-ketoglutarate; this pathway would permit the utilization of tHyp-B as a sole carbon and nitrogen source. The chain is 4-hydroxyproline 2-epimerase (hypF) from Paracoccus denitrificans (strain Pd 1222).